Here is a 312-residue protein sequence, read N- to C-terminus: Ribosomal RNA small subunit methyltransferase H (312 aa).

S-adenosyl-L-methionine-binding positions include 34 to 36, Asp54, Phe78, Asp100, and Gln107; that span reads GGH.

It belongs to the methyltransferase superfamily. RsmH family.

Its subcellular location is the cytoplasm. The catalysed reaction is cytidine(1402) in 16S rRNA + S-adenosyl-L-methionine = N(4)-methylcytidine(1402) in 16S rRNA + S-adenosyl-L-homocysteine + H(+). Specifically methylates the N4 position of cytidine in position 1402 (C1402) of 16S rRNA. This Salmonella choleraesuis (strain SC-B67) protein is Ribosomal RNA small subunit methyltransferase H.